The sequence spans 85 residues: Large ribosomal subunit protein bL27 (85 aa).

The segment at 1-22 (MAHKKAGGSTRNGRDSESKRLG) is disordered.

The protein belongs to the bacterial ribosomal protein bL27 family.

This is Large ribosomal subunit protein bL27 from Marinomonas sp. (strain MWYL1).